Reading from the N-terminus, the 380-residue chain is Queuine tRNA-ribosyltransferase (380 aa).

Residue D96 is the Proton acceptor of the active site. Substrate contacts are provided by residues 96–100 (DSGGF), D150, Q193, and G220. The interval 251–257 (GVGAPDS) is RNA binding. D270 functions as the Nucleophile in the catalytic mechanism. The interval 275–279 (TRIAR) is RNA binding; important for wobble base 34 recognition. The Zn(2+) site is built by C308, C310, C313, and H339.

The protein belongs to the queuine tRNA-ribosyltransferase family. In terms of assembly, homodimer. Within each dimer, one monomer is responsible for RNA recognition and catalysis, while the other monomer binds to the replacement base PreQ1. Zn(2+) is required as a cofactor.

The catalysed reaction is 7-aminomethyl-7-carbaguanine + guanosine(34) in tRNA = 7-aminomethyl-7-carbaguanosine(34) in tRNA + guanine. The protein operates within tRNA modification; tRNA-queuosine biosynthesis. In terms of biological role, catalyzes the base-exchange of a guanine (G) residue with the queuine precursor 7-aminomethyl-7-deazaguanine (PreQ1) at position 34 (anticodon wobble position) in tRNAs with GU(N) anticodons (tRNA-Asp, -Asn, -His and -Tyr). Catalysis occurs through a double-displacement mechanism. The nucleophile active site attacks the C1' of nucleotide 34 to detach the guanine base from the RNA, forming a covalent enzyme-RNA intermediate. The proton acceptor active site deprotonates the incoming PreQ1, allowing a nucleophilic attack on the C1' of the ribose to form the product. After dissociation, two additional enzymatic reactions on the tRNA convert PreQ1 to queuine (Q), resulting in the hypermodified nucleoside queuosine (7-(((4,5-cis-dihydroxy-2-cyclopenten-1-yl)amino)methyl)-7-deazaguanosine). This is Queuine tRNA-ribosyltransferase from Streptococcus pneumoniae (strain ATCC BAA-255 / R6).